A 762-amino-acid chain; its full sequence is 5-methyltetrahydropteroyltriglutamate--homocysteine methyltransferase (762 aa).

5-methyltetrahydropteroyltri-L-glutamate-binding positions include 17–20 and Lys-111; that span reads REWK. L-homocysteine contacts are provided by residues 435–437 and Glu-488; that span reads IGS. Residues 435–437 and Glu-488 contribute to the L-methionine site; that span reads IGS. 5-methyltetrahydropteroyltri-L-glutamate-binding positions include 519–520 and Trp-565; that span reads RC. Residue Asp-603 coordinates L-homocysteine. Asp-603 contributes to the L-methionine binding site. A 5-methyltetrahydropteroyltri-L-glutamate-binding site is contributed by Glu-609. Zn(2+) contacts are provided by His-645, Cys-647, and Glu-669. The active-site Proton donor is the His-698. Position 730 (Cys-730) interacts with Zn(2+).

This sequence belongs to the vitamin-B12 independent methionine synthase family. It depends on Zn(2+) as a cofactor.

The enzyme catalyses 5-methyltetrahydropteroyltri-L-glutamate + L-homocysteine = tetrahydropteroyltri-L-glutamate + L-methionine. Its pathway is amino-acid biosynthesis; L-methionine biosynthesis via de novo pathway; L-methionine from L-homocysteine (MetE route): step 1/1. Its function is as follows. Catalyzes the transfer of a methyl group from 5-methyltetrahydrofolate to homocysteine resulting in methionine formation. This is 5-methyltetrahydropteroyltriglutamate--homocysteine methyltransferase from Bacillus thuringiensis (strain Al Hakam).